A 160-amino-acid chain; its full sequence is Negative modulator of initiation of replication (160 aa).

This sequence belongs to the SeqA family. As to quaternary structure, homodimer. Polymerizes to form helical filaments.

It localises to the cytoplasm. Negative regulator of replication initiation, which contributes to regulation of DNA replication and ensures that replication initiation occurs exactly once per chromosome per cell cycle. Binds to pairs of hemimethylated GATC sequences in the oriC region, thus preventing assembly of replication proteins and re-initiation at newly replicated origins. Repression is relieved when the region becomes fully methylated. The chain is Negative modulator of initiation of replication from Idiomarina loihiensis (strain ATCC BAA-735 / DSM 15497 / L2-TR).